The sequence spans 466 residues: Ras GTPase-activating protein-binding protein 1 (466 aa).

The 123-residue stretch at 11–133 (VGREFVRQYY…FYVHNDIFRY (123 aa)) folds into the NTF2 domain. Residues Lys36, Lys50, Lys59, Lys64, Lys76, and Lys123 each participate in a glycyl lysine isopeptide (Lys-Gly) (interchain with G-Cter in ubiquitin) cross-link. Residues 142-225 (VTEPQEESEE…EPVLEETAPE (84 aa)) form an acidic disordered region region. The residue at position 143 (Thr143) is a Phosphothreonine. Disordered regions lie at residues 144 to 172 (EPQE…DSGT) and 184 to 243 (EEHL…QTVQ). 2 stretches are compositionally biased toward acidic residues: residues 145 to 157 (PQEE…EEPE) and 185 to 206 (EHLE…EQEP). Ser149 is modified (phosphoserine). Ser231, Ser232, Ser250, and Ser253 each carry phosphoserine. The tract at residues 255-329 (TSKNLPPSGA…REAGEQGDIE (75 aa)) is disordered. 2 stretches are compositionally biased toward basic and acidic residues: residues 297-307 (PQRDQRVREQR) and 318-329 (PIREAGEQGDIE). The RRM domain maps to 340–415 (HQLFIGNLPH…VRLNVEEKKT (76 aa)). Residues Lys353 and Lys357 each participate in a glycyl lysine isopeptide (Lys-Gly) (interchain with G-Cter in ubiquitin) cross-link. Ser373 is subject to Phosphoserine. Lys376 is covalently cross-linked (Glycyl lysine isopeptide (Lys-Gly) (interchain with G-Cter in ubiquitin)). Lys376 is modified (N6-acetyllysine; alternate). Lys376 participates in a covalent cross-link: Glycyl lysine isopeptide (Lys-Gly) (interchain with G-Cter in SUMO2); alternate. Lys393 participates in a covalent cross-link: Glycyl lysine isopeptide (Lys-Gly) (interchain with G-Cter in ubiquitin); alternate. Positions 410–466 (VEEKKTRAAREGDRRDNRLRGPGGPRGGLGGGMRGPPRGGMVQKPGFGVGRGLAPRQ) are RG-rich region. The span at 413-428 (KKTRAAREGDRRDNRL) shows a compositional bias: basic and acidic residues. The tract at residues 413-466 (KKTRAAREGDRRDNRLRGPGGPRGGLGGGMRGPPRGGMVQKPGFGVGRGLAPRQ) is disordered. The residue at position 429 (Arg429) is an Asymmetric dimethylarginine. Over residues 430–447 (GPGGPRGGLGGGMRGPPR) the composition is skewed to gly residues. Position 435 is an asymmetric dimethylarginine; alternate (Arg435). Residue Arg435 is modified to Dimethylated arginine; alternate. Arg435 is subject to Omega-N-methylarginine; alternate. Position 447 is an omega-N-methylarginine (Arg447). At Arg460 the chain carries Dimethylated arginine; alternate. Position 460 is an omega-N-methylarginine; alternate (Arg460). Arg465 is modified (omega-N-methylarginine).

Homodimer and oligomer. Component of a TAU mRNP complex, at least composed of IGF2BP1, ELAVL4 and G3BP1. Binds to the SH3 domain of Ras GTPase-activating protein (RASA1) in proliferating cells. No interaction in quiescent cells. Interacts (via NTF2 domain) with USP10; inhibiting stress granule formation by lowering G3BP1 valence. Interacts (via NTF2 domain) with CAPRIN1; promoting stress granule formation by lowering the saturation-concentration of G3BP1. Interacts (via NTF2 domain) with UBAP2L; promoting stress granule formation. Associates (via RG-rich region) with 40S ribosome subunits. Interacts with RPTOR and SPAG5; this complex is increased by oxidative stress. Interacts with ATXN2L. Interacts with STYXL1. Interacts with CGAS (via N-terminus); this interaction promotes the DNA-binding and activation of CGAS. Interacts (via C-terminus) with RIGI. Interacts with PABPC1. Interacts with QKI (isoforms QKI6 and QKI7); directing N(7)-methylguanine-containing mRNAs to stress granules. In terms of assembly, (Microbial infection) Interacts with Semliki forest virus non-structural protein 3 (via C-terminus); this interaction inhibits the formation of stress granules on viral mRNAs and the nsp3-G3BP1 complexes bind viral RNAs and probably orchestrate the assembly of viral replication complexes. As to quaternary structure, (Microbial infection) Interacts with Chikungunya virus non-structural protein 3 (via C-terminus); this interaction inhibits the formation of stress granules on viral mRNAs and the nsp3-G3BP1 complexes bind viral RNAs and probably orchestrate the assembly of viral replication complexes. (Microbial infection) Interacts with Sindbis virus non-structural protein 3 (via C-terminus); this interaction inhibits the formation of stress granules on viral mRNAs and the nsp3-G3BP1 complexes bind viral RNAs and probably orchestrate the assembly of viral replication complexes. In terms of assembly, (Microbial infection) Interacts with Zika virus capsid protein C; this interaction is probably linked to the inhibition of stress granules formation by the virus. As to quaternary structure, (Microbial infection) Interacts with reovirus type 2 protein sigma-NS; this interaction induces the relocalization of G3BP1 to the outer periphery of sigma-NS/mu-Ns viral factories and is probably involved in the suppression of the integrated stress response by the virus. (Microbial infection) Interacts with SARS-CoV-2 N protein; the interaction is enhanced by host HDAC6 which deacetylates the viral N protein and promotes N protein association with G3BP1, disrupting stress granule formation and facilitating viral replication. Interacts with HDAC6; the interaction increases during SARS-CoV-2 infection. It depends on Mg(2+) as a cofactor. In terms of processing, phosphorylation of the acidic disordered region regulates stress granule assembly. RASA1-dependent phosphorylation of Ser-149 induces a conformational change that prevents self-association. Dephosphorylation after HRAS activation is required for stress granule assembly. Ser-149 phosphorylation induces partial nuclear localization. Post-translationally, ubiquitinated by TRIM21 via 'Lys-63'-linked polyubiquitination in the NTF2 domain in response to heat shock, leading to stress granule disassembly: ubiquitination promotes interaction with the FAF2 adapter, followed by interaction with VCP, which extracts G3BP1 from stress granules, leading to stress granule disassembly. In case of prolonged stress, ubiquitination by TRIM21 leads to autophagy-dependent degradation of G3BP1 via recruitment of ubiquitinated G3BP1 by SQSTM1 and/or CALCOCO2 to autophagosomes. (Microbial infection) Cleaved by human enterovirus 71; this cleavage induces the disassembly of cytoplasmic stress granules. Cleaved by Foot-and-mouth disease virus; this cleavage suppresses the formation of cytoplasmic stress granules. In terms of processing, arg-435 is dimethylated, probably to asymmetric dimethylarginine. Post-translationally, (Microbial infection) Cleaved by Encephalomyocarditis virus protease 3C; this cleavage suppresses the formation of cytoplasmic stress granules. As to expression, ubiquitous.

The protein localises to the cytoplasm. It is found in the cytosol. Its subcellular location is the perikaryon. The protein resides in the stress granule. It localises to the nucleus. The catalysed reaction is ATP + H2O = ADP + phosphate + H(+). Under physiological conditions, G3BP1 adopts a compact state that is stabilized by intramolecular interactions between the RG-rich and the acidic regions that inhibit phase separation. Upon stress, polysomes disassemble and mRNAs are released in an unfolded protein-free state. Binding of unfolded mRNA to G3BP1 outcompetes the intramolecular interactions and RNA-bound G3BP1 adopts an expanded conformation in which the RG-rich region becomes exposed to engage in protein-protein and protein-RNA interactions, allowing physical cross-linking of RNA molecules to form protein-RNA condensates, leading to liquid-liquid phase separation (LLPS). Its function is as follows. Protein involved in various processes, such as stress granule formation and innate immunity. Plays an essential role in stress granule formation. Stress granules are membraneless compartments that store mRNAs and proteins, such as stalled translation pre-initiation complexes, in response to stress. Promotes formation of stress granules phase-separated membraneless compartment by undergoing liquid-liquid phase separation (LLPS) upon unfolded RNA-binding: functions as a molecular switch that triggers RNA-dependent LLPS in response to a rise in intracellular free RNA concentrations. Also acts as an ATP- and magnesium-dependent helicase: unwinds DNA/DNA, RNA/DNA, and RNA/RNA substrates with comparable efficiency. Acts unidirectionally by moving in the 5' to 3' direction along the bound single-stranded DNA. Unwinds preferentially partial DNA and RNA duplexes having a 17 bp annealed portion and either a hanging 3' tail or hanging tails at both 5'- and 3'-ends. Plays an essential role in innate immunity by promoting CGAS and RIGI activity. Participates in the DNA-triggered cGAS/STING pathway by promoting the DNA binding and activation of CGAS. Triggers the condensation of cGAS, a process probably linked to the formation of membrane-less organelles. Also enhances RIGI-induced type I interferon production probably by helping RIGI at sensing pathogenic RNA. May also act as a phosphorylation-dependent sequence-specific endoribonuclease in vitro: Cleaves exclusively between cytosine and adenine and cleaves MYC mRNA preferentially at the 3'-UTR. The polypeptide is Ras GTPase-activating protein-binding protein 1 (Homo sapiens (Human)).